The following is a 122-amino-acid chain: Large ribosomal subunit protein uL14 (122 aa).

Belongs to the universal ribosomal protein uL14 family. Part of the 50S ribosomal subunit. Forms a cluster with proteins L3 and L19. In the 70S ribosome, L14 and L19 interact and together make contacts with the 16S rRNA in bridges B5 and B8.

Binds to 23S rRNA. Forms part of two intersubunit bridges in the 70S ribosome. The polypeptide is Large ribosomal subunit protein uL14 (Polynucleobacter necessarius subsp. necessarius (strain STIR1)).